The sequence spans 80 residues: Putative membrane protein insertion efficiency factor (80 aa).

The disordered stretch occupies residues 61 to 80 (KTGKDPIPDHFSLKRNQEGE). The segment covering 62-80 (TGKDPIPDHFSLKRNQEGE) has biased composition (basic and acidic residues).

Belongs to the UPF0161 family.

It is found in the cell membrane. In terms of biological role, could be involved in insertion of integral membrane proteins into the membrane. The sequence is that of Putative membrane protein insertion efficiency factor from Streptococcus pneumoniae (strain CGSP14).